A 975-amino-acid polypeptide reads, in one-letter code: Nesprin-3 (975 aa).

Topologically, residues 1–925 (MTQQPQDDFD…LGSLFRRACC (925 aa)) are cytoplasmic. The stretch at 220–325 (REHEEYQAGV…WEEEEERLRG (106 aa)) is one Spectrin 1 repeat. Positions 617 to 645 (NHQHKMDQLSSDFQALQRSLEDLVDRCRQ) form a coiled coil. A Spectrin 2 repeat occupies 647-740 (VQEHCTFSHQ…RELAESWRAL (94 aa)). A KASH domain is found at 917 to 975 (GSLFRRACCVALPLQLLLLLFLLLLFLLPIREEDRSCTLANNFARSFTLMLRYNGPPPT). A helical; Anchor for type IV membrane protein membrane pass occupies residues 926–946 (VALPLQLLLLLFLLLLFLLPI). At 947–975 (REEDRSCTLANNFARSFTLMLRYNGPPPT) the chain is on the perinuclear space side.

This sequence belongs to the nesprin family. Core component of LINC complexes which are composed of inner nuclear membrane SUN domain-containing proteins coupled to outer nuclear membrane KASH domain-containing nesprins. SUN and KASH domain-containing proteins seem to bind each other promiscuously; however, differentially expression of LINC complex constituents can give rise to specific assemblies. Interacts with SUN1 and SUN2; probably forming respective LINC complexes. Interacts with PLEC (via actin-binding domain). Interacts with DST. Interacts with SYNE1 via spectrin repeats. Interacts (via KASH domain) with TOR1A (ATP-bound); the interaction is required for SYNE3 nuclear envelope localization. Post-translationally, the disulfid bond with SUN1 or SUN2 is required for stability of the respective LINC complex under tensile forces. As to expression, expressed in aortic endothelial cells (at protein level).

The protein localises to the nucleus outer membrane. The protein resides in the nucleus envelope. It is found in the rough endoplasmic reticulum. In terms of biological role, as a component of the LINC (LInker of Nucleoskeleton and Cytoskeleton) complex involved in the connection between the nuclear lamina and the cytoskeleton. The nucleocytoplasmic interactions established by the LINC complex play an important role in the transmission of mechanical forces across the nuclear envelope and in nuclear movement and positioning. Probable anchoring protein which tethers the nucleus to the cytoskeleton by binding PLEC which can associate with the intermediate filament system. Plays a role in the regulation of aortic epithelial cell morphology, and is required for flow-induced centrosome polarization and directional migration in aortic endothelial cells. This is Nesprin-3 from Homo sapiens (Human).